A 687-amino-acid chain; its full sequence is Acetolactate synthase catalytic subunit, mitochondrial (687 aa).

A mitochondrion-targeting transit peptide spans 1-90 (MIRQSTLKNF…AEPDMDTSFV (90 aa)). Positions 43 to 52 (YYSASPLPAS) are enriched in low complexity. The disordered stretch occupies residues 43–68 (YYSASPLPASKRPEPAPSFNVDPLEQ). Glu139 serves as a coordination point for thiamine diphosphate. Residues Arg241, 355 to 376 (HGCATANLAVQNADLIIAVGAR), and 407 to 426 (EVSPKNINKVVQTQIAVEGD) each bind FAD. The thiamine pyrophosphate binding stretch occupies residues 499-579 (QHQMWAAQHW…VKILILNNEE (81 aa)). Mg(2+) is bound by residues Asp550, Asn577, and Glu579.

It belongs to the TPP enzyme family. In terms of assembly, homodimer. The acetolactate synthase complex contains the catalytic subunit ILV2 and the regulatory small subunit ILV6. It depends on Mg(2+) as a cofactor. The cofactor is thiamine diphosphate.

The protein localises to the mitochondrion. It catalyses the reaction 2 pyruvate + H(+) = (2S)-2-acetolactate + CO2. It carries out the reaction 2-oxobutanoate + pyruvate + H(+) = (S)-2-ethyl-2-hydroxy-3-oxobutanoate + CO2. The protein operates within amino-acid biosynthesis; L-isoleucine biosynthesis; L-isoleucine from 2-oxobutanoate: step 1/4. It participates in amino-acid biosynthesis; L-valine biosynthesis; L-valine from pyruvate: step 1/4. Its activity is regulated as follows. The regulatory subunit ILV6 stimulates enzymatic activity seven- to tenfold and confers sensitivity to inhibition by valine and activation by ATP. Functionally, catalytic subunit of mitochondrial acetolactate synthase, which catalyzes the first of a series of common steps in the biosynthesis of the branched-chain amino acids. Catalyzes the irreversible decarboxylation of pyruvate to a bound hydroxyethyl group that then condenses with either a second pyruvate molecule to form 2-acetolactate (AL) or with 2-ketobutyrate to form 2-aceto-2-hydroxybutyrate (AHB). The first product is the precursor for valine and leucine biosynthesis, while the second leads to isoleucine. This chain is Acetolactate synthase catalytic subunit, mitochondrial (ILV2), found in Saccharomyces cerevisiae (strain ATCC 204508 / S288c) (Baker's yeast).